The primary structure comprises 184 residues: Protein GrpE (184 aa).

Residues M1–S14 are compositionally biased toward polar residues. Positions M1–I35 are disordered.

This sequence belongs to the GrpE family. Homodimer.

The protein localises to the cytoplasm. In terms of biological role, participates actively in the response to hyperosmotic and heat shock by preventing the aggregation of stress-denatured proteins, in association with DnaK and GrpE. It is the nucleotide exchange factor for DnaK and may function as a thermosensor. Unfolded proteins bind initially to DnaJ; upon interaction with the DnaJ-bound protein, DnaK hydrolyzes its bound ATP, resulting in the formation of a stable complex. GrpE releases ADP from DnaK; ATP binding to DnaK triggers the release of the substrate protein, thus completing the reaction cycle. Several rounds of ATP-dependent interactions between DnaJ, DnaK and GrpE are required for fully efficient folding. The polypeptide is Protein GrpE (Acinetobacter baylyi (strain ATCC 33305 / BD413 / ADP1)).